The following is a 61-amino-acid chain: MKKEFLDLYMILSVLAGVIGIFYLTTPYQDRPDKSLSYYMTLSVVTGILALIYLQNHHKKN.

A run of 2 helical transmembrane segments spans residues 5–25 (FLDLYMILSVLAGVIGIFYLT) and 35–55 (SLSYYMTLSVVTGILALIYLQ).

The protein localises to the membrane. The chain is Transmembrane protein 300R from Invertebrate iridescent virus 6 (IIV-6).